A 286-amino-acid polypeptide reads, in one-letter code: Polyamine aminopropyltransferase (286 aa).

A PABS domain is found at 5–238 (PLWHETLHDH…GIMTFAWASD (234 aa)). Gln-33 is a binding site for S-methyl-5'-thioadenosine. Spermidine is bound by residues His-64 and Asp-88. S-methyl-5'-thioadenosine is bound by residues Glu-108 and 140–141 (DG). The active-site Proton acceptor is Asp-158. 158 to 161 (DCTD) lines the spermidine pocket. Residue Pro-165 participates in S-methyl-5'-thioadenosine binding.

It belongs to the spermidine/spermine synthase family. As to quaternary structure, homodimer or homotetramer.

The protein resides in the cytoplasm. The catalysed reaction is S-adenosyl 3-(methylsulfanyl)propylamine + putrescine = S-methyl-5'-thioadenosine + spermidine + H(+). Its pathway is amine and polyamine biosynthesis; spermidine biosynthesis; spermidine from putrescine: step 1/1. Functionally, catalyzes the irreversible transfer of a propylamine group from the amino donor S-adenosylmethioninamine (decarboxy-AdoMet) to putrescine (1,4-diaminobutane) to yield spermidine. The polypeptide is Polyamine aminopropyltransferase (Klebsiella pneumoniae subsp. pneumoniae (strain ATCC 700721 / MGH 78578)).